Reading from the N-terminus, the 98-residue chain is Large ribosomal subunit protein bL28 (98 aa).

Belongs to the bacterial ribosomal protein bL28 family.

The polypeptide is Large ribosomal subunit protein bL28 (Phenylobacterium zucineum (strain HLK1)).